A 562-amino-acid chain; its full sequence is Dihydroxy-acid dehydratase (562 aa).

A Mg(2+)-binding site is contributed by D80. A [2Fe-2S] cluster-binding site is contributed by C121. D122 and K123 together coordinate Mg(2+). K123 carries the post-translational modification N6-carboxylysine. C194 provides a ligand contact to [2Fe-2S] cluster. Residue E446 participates in Mg(2+) binding. S472 serves as the catalytic Proton acceptor.

It belongs to the IlvD/Edd family. In terms of assembly, homodimer. [2Fe-2S] cluster serves as cofactor. The cofactor is Mg(2+).

The catalysed reaction is (2R)-2,3-dihydroxy-3-methylbutanoate = 3-methyl-2-oxobutanoate + H2O. It carries out the reaction (2R,3R)-2,3-dihydroxy-3-methylpentanoate = (S)-3-methyl-2-oxopentanoate + H2O. The protein operates within amino-acid biosynthesis; L-isoleucine biosynthesis; L-isoleucine from 2-oxobutanoate: step 3/4. It functions in the pathway amino-acid biosynthesis; L-valine biosynthesis; L-valine from pyruvate: step 3/4. Its function is as follows. Functions in the biosynthesis of branched-chain amino acids. Catalyzes the dehydration of (2R,3R)-2,3-dihydroxy-3-methylpentanoate (2,3-dihydroxy-3-methylvalerate) into 2-oxo-3-methylpentanoate (2-oxo-3-methylvalerate) and of (2R)-2,3-dihydroxy-3-methylbutanoate (2,3-dihydroxyisovalerate) into 2-oxo-3-methylbutanoate (2-oxoisovalerate), the penultimate precursor to L-isoleucine and L-valine, respectively. In Staphylococcus aureus (strain USA300 / TCH1516), this protein is Dihydroxy-acid dehydratase.